Reading from the N-terminus, the 387-residue chain is Probable WRKY transcription factor 36 (387 aa).

The WRKY DNA-binding region spans 197–264 (CEDPSINDGC…YEGNHDHPLP (68 aa)). The disordered stretch occupies residues 322 to 366 (RPNYPNQLPDDYPLSSSSFSLNFSSPDPPPPSSHDHTLNFSGLRT). Over residues 329 to 346 (LPDDYPLSSSSFSLNFSS) the composition is skewed to low complexity.

It localises to the nucleus. Transcription factor. Interacts specifically with the W box (5'-(T)TGAC[CT]-3'), a frequently occurring elicitor-responsive cis-acting element. The chain is Probable WRKY transcription factor 36 (WRKY36) from Arabidopsis thaliana (Mouse-ear cress).